We begin with the raw amino-acid sequence, 78 residues long: MSRVCQLTGTRANNGMAVSHSHIRTKKLQQANLQQRRLWWAEGNRWVKLRVTTRALKTIQKKGLGAYAKSLGINLAKI.

This sequence belongs to the bacterial ribosomal protein bL28 family.

The sequence is that of Large ribosomal subunit protein bL28 from Synechococcus sp. (strain CC9605).